The chain runs to 497 residues: tRNA-2-methylthio-N(6)-dimethylallyladenosine synthase (497 aa).

Positions 1 to 10 (MTLLDSDSRQ) are enriched in basic and acidic residues. Residues 1 to 26 (MTLLDSDSRQSAEVLPAAGPAPDRPR) form a disordered region. The MTTase N-terminal domain maps to 26 to 142 (RTYQVRTFGC…LPVLLERARI (117 aa)). The [4Fe-4S] cluster site is built by C35, C71, C105, C179, C183, and C186. In terms of domain architecture, Radical SAM core spans 165-395 (RESVYAAWVA…VALVEQIALE (231 aa)). Residues 398–464 (QAQVGRVVEV…PHCLIADQVL (67 aa)) enclose the TRAM domain.

This sequence belongs to the methylthiotransferase family. MiaB subfamily. In terms of assembly, monomer. It depends on [4Fe-4S] cluster as a cofactor.

The protein localises to the cytoplasm. It catalyses the reaction N(6)-dimethylallyladenosine(37) in tRNA + (sulfur carrier)-SH + AH2 + 2 S-adenosyl-L-methionine = 2-methylsulfanyl-N(6)-dimethylallyladenosine(37) in tRNA + (sulfur carrier)-H + 5'-deoxyadenosine + L-methionine + A + S-adenosyl-L-homocysteine + 2 H(+). Catalyzes the methylthiolation of N6-(dimethylallyl)adenosine (i(6)A), leading to the formation of 2-methylthio-N6-(dimethylallyl)adenosine (ms(2)i(6)A) at position 37 in tRNAs that read codons beginning with uridine. This Acidothermus cellulolyticus (strain ATCC 43068 / DSM 8971 / 11B) protein is tRNA-2-methylthio-N(6)-dimethylallyladenosine synthase.